The primary structure comprises 206 residues: Large ribosomal subunit protein uL4 (206 aa).

The protein belongs to the universal ribosomal protein uL4 family. Part of the 50S ribosomal subunit.

In terms of biological role, one of the primary rRNA binding proteins, this protein initially binds near the 5'-end of the 23S rRNA. It is important during the early stages of 50S assembly. It makes multiple contacts with different domains of the 23S rRNA in the assembled 50S subunit and ribosome. Forms part of the polypeptide exit tunnel. This chain is Large ribosomal subunit protein uL4, found in Methylorubrum extorquens (strain CM4 / NCIMB 13688) (Methylobacterium extorquens).